The sequence spans 191 residues: ATP synthase subunit b (191 aa).

A helical transmembrane segment spans residues 10–30; that stretch reads FLVPGPTAIAELIVFLLILFI. A disordered region spans residues 170 to 191; it reads RAQRQPAASDVVGGQQREEVHR.

This sequence belongs to the ATPase B chain family. As to quaternary structure, F-type ATPases have 2 components, F(1) - the catalytic core - and F(0) - the membrane proton channel. F(1) has five subunits: alpha(3), beta(3), gamma(1), delta(1), epsilon(1). F(0) has three main subunits: a(1), b(2) and c(10-14). The alpha and beta chains form an alternating ring which encloses part of the gamma chain. F(1) is attached to F(0) by a central stalk formed by the gamma and epsilon chains, while a peripheral stalk is formed by the delta and b chains.

The protein resides in the cell membrane. Functionally, f(1)F(0) ATP synthase produces ATP from ADP in the presence of a proton or sodium gradient. F-type ATPases consist of two structural domains, F(1) containing the extramembraneous catalytic core and F(0) containing the membrane proton channel, linked together by a central stalk and a peripheral stalk. During catalysis, ATP synthesis in the catalytic domain of F(1) is coupled via a rotary mechanism of the central stalk subunits to proton translocation. Its function is as follows. Component of the F(0) channel, it forms part of the peripheral stalk, linking F(1) to F(0). The polypeptide is ATP synthase subunit b (Acidothermus cellulolyticus (strain ATCC 43068 / DSM 8971 / 11B)).